The primary structure comprises 528 residues: Cytochrome P450 monooxygenase polB (528 aa).

The helical transmembrane segment at Ser3–Val23 threads the bilayer. Residue Cys473 participates in heme binding.

Belongs to the cytochrome P450 family. Requires heme as cofactor.

The protein resides in the membrane. The enzyme catalyses 4beta-carboxyl motiol + reduced [NADPH--hemoprotein reductase] + O2 = 2alpha-hydroxyl, 4beta-carboxyl motiol + oxidized [NADPH--hemoprotein reductase] + H2O + H(+). The catalysed reaction is 2-deoxypolytolypin + reduced [NADPH--hemoprotein reductase] + O2 = polytolypin + oxidized [NADPH--hemoprotein reductase] + H2O + H(+). The protein operates within secondary metabolite biosynthesis; terpenoid biosynthesis. Functionally, cytochrome P450 monooxygenase; part of the gene cluster that mediates the biosynthesis of antifungal fernane-type triterpenoid polytolypin. PolB acts as a hydroxylase and installs the 2-alpha-hydroxyl group in polytolypin. Within the pathway, the triterpene cyclase polA first catalyzes the cyclization of 2,3-oxidosqualene to motiol, polC converts the 4-alpha-methyl group of motiol to a carboxyl group, polB is responsible for appending a hydroxyl group at the 2-alpha position and polE is a dual functional P450, which can catalyze the formation of both the 1-beta-hydroxyl group and 10-beta-carboxyl group. The protein is Cytochrome P450 monooxygenase polB of Polytolypa hystricis (strain UAMH7299).